We begin with the raw amino-acid sequence, 272 residues long: CD40 ligand (272 aa).

The Cytoplasmic portion of the chain corresponds to 1–23 (MNEAYSPAAPRPMGSTSPSTMKM). The helical; Signal-anchor for type II membrane protein transmembrane segment at 24-44 (FMCFLSVFMVVQTIGTVLFCL) threads the bilayer. At 45–272 (YLHMKMDKME…GNTYFGMFKL (228 aa)) the chain is on the extracellular side. N-linked (GlcNAc...) asparagine glycosylation is found at Asn124 and Asn146. In terms of domain architecture, THD spans 136 to 272 (IATHLAGVKS…GNTYFGMFKL (137 aa)). An intrachain disulfide couples Cys190 to Cys229. Residue Asn251 is glycosylated (N-linked (GlcNAc...) asparagine).

It belongs to the tumor necrosis factor family. Homotrimer. Interacts with CD28. CD40 ligand, soluble form: Exists as either a monomer or a homotrimer. Forms a ternary complex between CD40 and integrins for CD40-CD40LG signaling. The soluble form derives from the membrane form by proteolytic processing.

It is found in the cell membrane. The protein resides in the cell surface. Its subcellular location is the secreted. In terms of biological role, cytokine that acts as a ligand to CD40/TNFRSF5. Costimulates T-cell proliferation and cytokine production. Induces the activation of NF-kappa-B. Mediates B-cell proliferation in the absence of co-stimulus as well as IgE production in the presence of IL4. Involved in immunoglobulin class switching. Its function is as follows. Acts as a ligand for integrins, specifically ITGA5:ITGB1 and ITGAV:ITGB3; both integrins and the CD40 receptor are required for activation of CD40-CD40LG signaling, which have cell-type dependent effects, such as B-cell activation, NF-kappa-B signaling and anti-apoptotic signaling. In Gallus gallus (Chicken), this protein is CD40 ligand (CD40LG).